Consider the following 480-residue polypeptide: UDP-N-acetylmuramate--L-alanine ligase (480 aa).

ATP is bound at residue 122–128; it reads GTHGKTT.

The protein belongs to the MurCDEF family.

It localises to the cytoplasm. The enzyme catalyses UDP-N-acetyl-alpha-D-muramate + L-alanine + ATP = UDP-N-acetyl-alpha-D-muramoyl-L-alanine + ADP + phosphate + H(+). It participates in cell wall biogenesis; peptidoglycan biosynthesis. Its function is as follows. Cell wall formation. In Pseudomonas aeruginosa (strain LESB58), this protein is UDP-N-acetylmuramate--L-alanine ligase.